Here is a 180-residue protein sequence, read N- to C-terminus: Isopentenyl-diphosphate Delta-isomerase (180 aa).

Positions 22 and 28 each coordinate Mn(2+). One can recognise a Nudix hydrolase domain in the interval 26 to 160; it reads LKHKAVSVFA…PERFTPWLKI (135 aa). The active site involves C62. Mg(2+) is bound at residue C62. H64 serves as a coordination point for Mn(2+). E82 provides a ligand contact to Mg(2+). Mn(2+) is bound by residues E108 and E110. E110 is a catalytic residue.

It belongs to the IPP isomerase type 1 family. Requires Mg(2+) as cofactor. Mn(2+) serves as cofactor.

The protein localises to the cytoplasm. The enzyme catalyses isopentenyl diphosphate = dimethylallyl diphosphate. Its pathway is isoprenoid biosynthesis; dimethylallyl diphosphate biosynthesis; dimethylallyl diphosphate from isopentenyl diphosphate: step 1/1. Functionally, catalyzes the 1,3-allylic rearrangement of the homoallylic substrate isopentenyl (IPP) to its highly electrophilic allylic isomer, dimethylallyl diphosphate (DMAPP). This chain is Isopentenyl-diphosphate Delta-isomerase, found in Ruegeria pomeroyi (strain ATCC 700808 / DSM 15171 / DSS-3) (Silicibacter pomeroyi).